The chain runs to 643 residues: Versicolorin B synthase (643 aa).

A propeptide spanning residues 1-41 is cleaved from the precursor; that stretch reads MGRNWFQVTAMAVVPVVGIMAAVNPTILSSAASSLPSLGAM. FAD is bound by residues 84-85 and 105-106; these read TA and EA. N-linked (GlcNAc...) asparagine glycosylation occurs at asparagine 116. 171-174 serves as a coordination point for FAD; sequence GAML. N-linked (GlcNAc...) asparagine glycans are attached at residues asparagine 221 and asparagine 507. FAD-binding positions include alanine 613 and 624–625; that span reads PM.

Belongs to the GMC oxidoreductase family. In terms of assembly, homodimer. The cofactor is FAD. N-glycosylated.

Its subcellular location is the cytoplasm. It localises to the cytosol. It catalyses the reaction (2S-3S)-versiconal hemiacetal = versicolorin B + H2O. The enzyme catalyses (S)-5'-oxoaverantin + H(+) = (1'S,5'S)-averufin + H2O. It participates in mycotoxin biosynthesis; aflatoxin biosynthesis. Its function is as follows. Dual cyclase; part of the gene cluster that mediates the biosynthesis of aflatoxins, a group of polyketide-derived furanocoumarins, and part of the most toxic and carcinogenic compounds among the known mycotoxins. The four major aflatoxins produced by A.parasiticus are aflatoxin B1 (AFB1), aflatoxin B2 (AFB2), aflatoxin G1 (AFG1) and aflatoxin G2 (AFG2). Aflk plays a dual role within the aflatoxin pathway, as a 5'-oxoaverantin cyclase that mediates conversion of 5'-oxoaverantin (OAVN) to averufin (AVF), as well as a versicolorin B synthase that converts versiconal (VAL) to versicolorin B (VERB) by closing the bisfuran ring of aflatoxin which is required for DNA-binding, thus giving to aflatoxin its activity as a mutagen. The biosynthesis of aflatoxins begins with the norsolorinic acid synthase aflC that combines a hexanoyl starter unit produced by the fatty acid synthase aflA/aflB and 7 malonyl-CoA extender units to synthesize the precursor NOR. The second step is the conversion of NOR to averantin and requires the norsolorinic acid ketoreductase aflD, which catalyzes the dehydration of norsolorinic acid to form (1'S)-averantin. The norsolorinic acid reductases aflE and aflF may also play a role in the conversion of NOR to AVN. The cytochrome P450 monooxygenase aflG then catalyzes the hydroxylation of AVN to 5'hydroxyaverantin (HAVN). The next step is performed by the 5'-hydroxyaverantin dehydrogenase aflH that transforms HAVN to 5'-oxoaverantin (OAVN) which is further converted to averufin (AVF) by aflK that plays a dual role in the pathway, as a 5'-oxoaverantin cyclase that mediates conversion of 5'-oxoaverantin, as well as a versicolorin B synthase in a later step in the pathway. The averufin oxidase aflI catalyzes the conversion of AVF to versiconal hemiacetal acetate (VHA). VHA is then the substrate for the versiconal hemiacetal acetate esterase aflJ to yield versiconal (VAL). Versicolorin B synthase aflK then converts VAL to versicolorin B (VERB) by closing the bisfuran ring of aflatoxin which is required for DNA-binding, thus giving to aflatoxin its activity as a mutagen. Then, the activity of the versicolorin B desaturase aflL leads to versicolorin A (VERA). A branch point starts from VERB since it can also be converted to dihydrodemethylsterigmatocystin (DMDHST), probably also by aflL, VERA being a precursor for aflatoxins B1 and G1, and DMDHST for aflatoxins B2 and G2. Next, the versicolorin reductase aflM and the cytochrome P450 monooxygenase aflN are involved in conversion of VERA to demethylsterigmatocystin (DMST). AflX and aflY seem also involved in this step, through probable aflX-mediated epoxide ring-opening step following versicolorin A oxidation and aflY-mediated Baeyer-Villiger oxidation required for the formation of the xanthone ring. The methyltransferase aflO then leads to the modification of DMST to sterigmatocystin (ST), and of DMDHST to dihydrosterigmatocystin (DHST). Both ST and DHST are then substrates of the O-methyltransferase aflP to yield O-methylsterigmatocystin (OMST) and dihydro-O-methylsterigmatocystin (DHOMST), respectively. Finally OMST is converted to aflatoxins B1 and G1, and DHOMST to aflatoxins B2 and G2, via the action of several enzymes including O-methylsterigmatocystin oxidoreductase aflQ, the cytochrome P450 monooxygenase aflU, but also the NADH-dependent flavin oxidoreductase nadA which is specifically required for the synthesis of AFG1. This Aspergillus parasiticus (strain ATCC 56775 / NRRL 5862 / SRRC 143 / SU-1) protein is Versicolorin B synthase.